The sequence spans 470 residues: Argininosuccinate lyase (470 aa).

Belongs to the lyase 1 family. Argininosuccinate lyase subfamily.

The protein resides in the cytoplasm. It carries out the reaction 2-(N(omega)-L-arginino)succinate = fumarate + L-arginine. Its pathway is amino-acid biosynthesis; L-arginine biosynthesis; L-arginine from L-ornithine and carbamoyl phosphate: step 3/3. This Ehrlichia chaffeensis (strain ATCC CRL-10679 / Arkansas) protein is Argininosuccinate lyase.